Reading from the N-terminus, the 389-residue chain is Succinate--CoA ligase [ADP-forming] subunit beta (389 aa).

ATP contacts are provided by residues Lys-46, 53 to 55 (GRG), Glu-99, Cys-102, and Glu-107. Mg(2+) contacts are provided by Asn-199 and Asp-213. Substrate is bound by residues Asn-264 and 321 to 323 (GIV).

Belongs to the succinate/malate CoA ligase beta subunit family. Heterotetramer of two alpha and two beta subunits. Requires Mg(2+) as cofactor.

It catalyses the reaction succinate + ATP + CoA = succinyl-CoA + ADP + phosphate. The catalysed reaction is GTP + succinate + CoA = succinyl-CoA + GDP + phosphate. It participates in carbohydrate metabolism; tricarboxylic acid cycle; succinate from succinyl-CoA (ligase route): step 1/1. Succinyl-CoA synthetase functions in the citric acid cycle (TCA), coupling the hydrolysis of succinyl-CoA to the synthesis of either ATP or GTP and thus represents the only step of substrate-level phosphorylation in the TCA. The beta subunit provides nucleotide specificity of the enzyme and binds the substrate succinate, while the binding sites for coenzyme A and phosphate are found in the alpha subunit. The protein is Succinate--CoA ligase [ADP-forming] subunit beta of Haemophilus influenzae (strain PittEE).